We begin with the raw amino-acid sequence, 309 residues long: Protein-L-isoaspartate O-methyltransferase 2 (309 aa).

The short motif at 23–28 (KKRKKK) is the Nuclear localization signal element. Ser-144 is a catalytic residue.

It belongs to the methyltransferase superfamily. L-isoaspartyl/D-aspartyl protein methyltransferase family. As to expression, expressed in rosette leaves, stems, cauline leaves, flowers and developing seeds.

The protein localises to the nucleus. The enzyme catalyses [protein]-L-isoaspartate + S-adenosyl-L-methionine = [protein]-L-isoaspartate alpha-methyl ester + S-adenosyl-L-homocysteine. Its function is as follows. Catalyzes the methyl esterification of L-isoaspartyl residues in peptides and proteins that result from spontaneous decomposition of normal L-aspartyl and L-asparaginyl residues. It plays a role in the repair and/or degradation of damaged proteins. The chain is Protein-L-isoaspartate O-methyltransferase 2 (PIMT2) from Arabidopsis thaliana (Mouse-ear cress).